A 573-amino-acid chain; its full sequence is DNA ligase (573 aa).

Glu248 is an ATP binding site. The active-site N6-AMP-lysine intermediate is the Lys250. ATP-binding residues include Arg255, Arg270, Glu299, Phe340, Arg432, and Lys438.

This sequence belongs to the ATP-dependent DNA ligase family. Requires Mg(2+) as cofactor.

The enzyme catalyses ATP + (deoxyribonucleotide)n-3'-hydroxyl + 5'-phospho-(deoxyribonucleotide)m = (deoxyribonucleotide)n+m + AMP + diphosphate.. Functionally, DNA ligase that seals nicks in double-stranded DNA during DNA replication, DNA recombination and DNA repair. The sequence is that of DNA ligase from Methanocaldococcus jannaschii (strain ATCC 43067 / DSM 2661 / JAL-1 / JCM 10045 / NBRC 100440) (Methanococcus jannaschii).